The following is a 471-amino-acid chain: Neuraminidase (471 aa).

Residues 1–6 (MNPNQK) are Intravirion-facing. A helical transmembrane segment spans residues 7 to 27 (LFALSGVAIALSVLNLLIGIS). The segment at 11–33 (SGVAIALSVLNLLIGISNVGLNV) is involved in apical transport and lipid raft association. The Virion surface segment spans residues 28 to 471 (NVGLNVSLHL…PDGAQIQYFS (444 aa)). Asparagine 32, asparagine 47, asparagine 56, asparagine 57, asparagine 67, asparagine 68, and asparagine 87 each carry an N-linked (GlcNAc...) asparagine; by host glycan. Residues 36–87 (HLKGEGVKQENNLTCTTITQNNTTVVENTYVNNTTIINKGTNLKAPNYLLLN) are hypervariable stalk region. Residues 90–471 (LCSVEGWVVI…PDGAQIQYFS (382 aa)) form a head of neuraminidase region. 8 cysteine pairs are disulfide-bonded: cysteine 91–cysteine 419, cysteine 123–cysteine 128, cysteine 183–cysteine 230, cysteine 232–cysteine 237, cysteine 278–cysteine 291, cysteine 280–cysteine 289, cysteine 318–cysteine 336, and cysteine 423–cysteine 450. Arginine 117 lines the substrate pocket. An N-linked (GlcNAc...) asparagine; by host glycan is attached at asparagine 145. Residue aspartate 150 is the Proton donor/acceptor of the active site. Arginine 151 contacts substrate. N-linked (GlcNAc...) asparagine; by host glycans are attached at residues asparagine 200 and asparagine 234. 276 to 277 (EE) serves as a coordination point for substrate. Arginine 292 serves as a coordination point for substrate. Positions 293, 297, and 324 each coordinate Ca(2+). Arginine 371 is a substrate binding site. A glycan (N-linked (GlcNAc...) asparagine; by host) is linked at asparagine 401. Residue tyrosine 405 is the Nucleophile of the active site.

Belongs to the glycosyl hydrolase 34 family. Homotetramer. The cofactor is Ca(2+). Post-translationally, N-glycosylated.

It localises to the virion membrane. The protein resides in the host apical cell membrane. The enzyme catalyses Hydrolysis of alpha-(2-&gt;3)-, alpha-(2-&gt;6)-, alpha-(2-&gt;8)- glycosidic linkages of terminal sialic acid residues in oligosaccharides, glycoproteins, glycolipids, colominic acid and synthetic substrates.. With respect to regulation, inhibited by the neuraminidase inhibitors zanamivir (Relenza) and oseltamivir (Tamiflu). These drugs interfere with the release of progeny virus from infected cells and are effective against all influenza strains. Resistance to neuraminidase inhibitors is quite rare. In terms of biological role, catalyzes the removal of terminal sialic acid residues from viral and cellular glycoconjugates. Cleaves off the terminal sialic acids on the glycosylated HA during virus budding to facilitate virus release. Additionally helps virus spread through the circulation by further removing sialic acids from the cell surface. These cleavages prevent self-aggregation and ensure the efficient spread of the progeny virus from cell to cell. Otherwise, infection would be limited to one round of replication. Described as a receptor-destroying enzyme because it cleaves a terminal sialic acid from the cellular receptors. May facilitate viral invasion of the upper airways by cleaving the sialic acid moieties on the mucin of the airway epithelial cells. Likely to plays a role in the budding process through its association with lipid rafts during intracellular transport. May additionally display a raft-association independent effect on budding. Plays a role in the determination of host range restriction on replication and virulence. Sialidase activity in late endosome/lysosome traffic seems to enhance virus replication. This is Neuraminidase from Aves (Horse).